The chain runs to 93 residues: uncharacterized protein (93 aa).

The protein resides in the plastid. Its subcellular location is the chloroplast. This is an uncharacterized protein from Diacronema lutheri (Unicellular marine alga).